The sequence spans 360 residues: MLVWLGEFLQQYYSGFNVISYITVRAILALLTALLVSLWIGPKVIRRLQLLKFGQEVRHDGPESHFSKRGTPTMGGVMILFAITVSTLLWANLANPYVWFSLFVLLGYGAIGFVDDYRKITRKNTDGLIARWKYFWLSVIALVAAFGMYAIGKDTDATRLVVPFFKEIMPQLGLFYIILTYFVIVGTSNAVNLTDGLDGLAIMPTVLVAGAFALIAWATGNVNFAEYLHIPYIKFSAELVVFCTAIVGAGLGFLWFNTYPAQVFMGDVGSLALGGALGVVAVLVRQEFLLVIMGGVFVVETLSVILQVGSYKLRKQRIFRMAPIHHHFELKGWPEPRVIVRFWIISLMLVLVGLVTLKLR.

A run of 10 helical transmembrane segments spans residues 21–41 (YITVRAILALLTALLVSLWIG), 73–93 (TMGGVMILFAITVSTLLWANL), 94–114 (ANPYVWFSLFVLLGYGAIGFV), 132–152 (WKYFWLSVIALVAAFGMYAIG), 168–188 (IMPQLGLFYIILTYFVIVGTS), 199–219 (GLAIMPTVLVAGAFALIAWAT), 235–255 (FSAELVVFCTAIVGAGLGFLW), 263–283 (VFMGDVGSLALGGALGVVAVL), 288–308 (FLLVIMGGVFVVETLSVILQV), and 338–358 (VIVRFWIISLMLVLVGLVTLK).

Belongs to the glycosyltransferase 4 family. MraY subfamily. Mg(2+) serves as cofactor.

It localises to the cell inner membrane. The catalysed reaction is UDP-N-acetyl-alpha-D-muramoyl-L-alanyl-gamma-D-glutamyl-meso-2,6-diaminopimeloyl-D-alanyl-D-alanine + di-trans,octa-cis-undecaprenyl phosphate = di-trans,octa-cis-undecaprenyl diphospho-N-acetyl-alpha-D-muramoyl-L-alanyl-D-glutamyl-meso-2,6-diaminopimeloyl-D-alanyl-D-alanine + UMP. Its pathway is cell wall biogenesis; peptidoglycan biosynthesis. Catalyzes the initial step of the lipid cycle reactions in the biosynthesis of the cell wall peptidoglycan: transfers peptidoglycan precursor phospho-MurNAc-pentapeptide from UDP-MurNAc-pentapeptide onto the lipid carrier undecaprenyl phosphate, yielding undecaprenyl-pyrophosphoryl-MurNAc-pentapeptide, known as lipid I. The chain is Phospho-N-acetylmuramoyl-pentapeptide-transferase from Pasteurella multocida (strain Pm70).